Here is a 255-residue protein sequence, read N- to C-terminus: Type III pantothenate kinase (255 aa).

Residue 6–13 (DVGNTNTV) coordinates ATP. Substrate contacts are provided by residues Tyr-100 and 107 to 110 (GADR). The active-site Proton acceptor is Asp-109. Asp-129 is a binding site for K(+). Thr-132 serves as a coordination point for ATP. A substrate-binding site is contributed by Thr-184.

Belongs to the type III pantothenate kinase family. Homodimer. The cofactor is NH4(+). K(+) is required as a cofactor.

The protein resides in the cytoplasm. It carries out the reaction (R)-pantothenate + ATP = (R)-4'-phosphopantothenate + ADP + H(+). It functions in the pathway cofactor biosynthesis; coenzyme A biosynthesis; CoA from (R)-pantothenate: step 1/5. Functionally, catalyzes the phosphorylation of pantothenate (Pan), the first step in CoA biosynthesis. The chain is Type III pantothenate kinase from Syntrophomonas wolfei subsp. wolfei (strain DSM 2245B / Goettingen).